The chain runs to 326 residues: Beta-ketoacyl-[acyl-carrier-protein] synthase III (326 aa).

Active-site residues include C115 and H253. Positions 254-258 (QANKR) are ACP-binding. Residue N283 is part of the active site.

Belongs to the thiolase-like superfamily. FabH family. Homodimer.

Its subcellular location is the cytoplasm. It catalyses the reaction malonyl-[ACP] + acetyl-CoA + H(+) = 3-oxobutanoyl-[ACP] + CO2 + CoA. It participates in lipid metabolism; fatty acid biosynthesis. Functionally, catalyzes the condensation reaction of fatty acid synthesis by the addition to an acyl acceptor of two carbons from malonyl-ACP. Catalyzes the first condensation reaction which initiates fatty acid synthesis and may therefore play a role in governing the total rate of fatty acid production. Possesses both acetoacetyl-ACP synthase and acetyl transacylase activities. Its substrate specificity determines the biosynthesis of branched-chain and/or straight-chain of fatty acids. The chain is Beta-ketoacyl-[acyl-carrier-protein] synthase III from Bradyrhizobium diazoefficiens (strain JCM 10833 / BCRC 13528 / IAM 13628 / NBRC 14792 / USDA 110).